We begin with the raw amino-acid sequence, 521 residues long: Cytochrome P450 monooxygenase astF (521 aa).

Residues 14 to 34 form a helical membrane-spanning segment; sequence TMATFLLPVAIGTIILLFLYG. Residues asparagine 198, asparagine 218, asparagine 268, and asparagine 281 are each glycosylated (N-linked (GlcNAc...) asparagine). Cysteine 430 contributes to the heme binding site.

This sequence belongs to the cytochrome P450 family. Heme is required as a cofactor.

It localises to the membrane. Its pathway is secondary metabolite biosynthesis; terpenoid biosynthesis. Its function is as follows. Cytochrome P450 monooxygenase; part of the gene cluster that mediates the biosynthesis of astellolides, drimane-type sesquiterpene esters that show antimicrobial, anti-inflammatory, and anti-tumor activities. The first step in astellolide biosynthesis is performed by the sesquiterpene cyclase astC that catalyzes the formation of drimanyl pyrophosphate from farnesyl pyrophosphate. Drimanyl pyrophosphate is then dephosphorylated by the sesquiterpene phosphatase astI to produce drimanyl monophosphate which is further dephosphorylated to drim-8-ene-11-ol by atsK. Drim-8-ene-11-ol is converted to confertifolin, probably by the cytochrome P450 monooxygenase astD and/or the dehydrogenase astE. The cytochrome P450 monooxygenases astB, astF and astJ then hydroxylate confertifolin at C6, C14, or C15 to form trihydroxy confertifolin. The nonribosomal peptide synthetase astA catalyzes ester bond formation between trihydroxy contifolin and benzoic acid (BA) or 4-hydroxy benzoic acid (4HBA), leading to the formation of dideacetyl astellolides A and B, respectively. Finally, the O-acetyltransferase astG converts dideacetyl astellolides A and B into deacetyl astellolides A and B. The chain is Cytochrome P450 monooxygenase astF from Aspergillus oryzae (strain ATCC 42149 / RIB 40) (Yellow koji mold).